The primary structure comprises 73 residues: Beta-defensin 50 (73 aa).

Positions 1 to 23 (MKTLHLLLLISGLLSVFVKGVGS) are cleaved as a signal peptide. 2 disulfides stabilise this stretch: cysteine 34–cysteine 63 and cysteine 46–cysteine 64.

The protein belongs to the beta-defensin family.

It is found in the secreted. Its function is as follows. Has bactericidal activity. The protein is Beta-defensin 50 (Defb50) of Rattus norvegicus (Rat).